The chain runs to 317 residues: Transaldolase (317 aa).

Lys-132 serves as the catalytic Schiff-base intermediate with substrate.

The protein belongs to the transaldolase family. Type 1 subfamily. In terms of assembly, homodimer.

It localises to the cytoplasm. It carries out the reaction D-sedoheptulose 7-phosphate + D-glyceraldehyde 3-phosphate = D-erythrose 4-phosphate + beta-D-fructose 6-phosphate. It participates in carbohydrate degradation; pentose phosphate pathway; D-glyceraldehyde 3-phosphate and beta-D-fructose 6-phosphate from D-ribose 5-phosphate and D-xylulose 5-phosphate (non-oxidative stage): step 2/3. In terms of biological role, transaldolase is important for the balance of metabolites in the pentose-phosphate pathway. The polypeptide is Transaldolase (Yersinia pseudotuberculosis serotype O:3 (strain YPIII)).